We begin with the raw amino-acid sequence, 73 residues long: Defensin-like protein 6 (73 aa).

Positions 1 to 26 (MENKFFAAFFLLLVLFSSQEIIGGEG) are cleaved as a signal peptide. Cystine bridges form between Cys-29–Cys-73, Cys-40–Cys-60, Cys-46–Cys-67, and Cys-50–Cys-69.

The protein belongs to the DEFL family.

The protein resides in the secreted. Confers broad-spectrum resistance to pathogens. The sequence is that of Defensin-like protein 6 (PDF2.5) from Arabidopsis thaliana (Mouse-ear cress).